We begin with the raw amino-acid sequence, 186 residues long: Elongation factor P (186 aa).

The protein belongs to the elongation factor P family.

Its subcellular location is the cytoplasm. It functions in the pathway protein biosynthesis; polypeptide chain elongation. Functionally, involved in peptide bond synthesis. Stimulates efficient translation and peptide-bond synthesis on native or reconstituted 70S ribosomes in vitro. Probably functions indirectly by altering the affinity of the ribosome for aminoacyl-tRNA, thus increasing their reactivity as acceptors for peptidyl transferase. This chain is Elongation factor P, found in Synechococcus sp. (strain RCC307).